Reading from the N-terminus, the 834-residue chain is Dual specificity calcium/calmodulin-dependent 3',5'-cyclic nucleotide phosphodiesterase 1 (834 aa).

The interval 152–338 (HSHGRDDQQQ…DELSEVQPDA (187 aa)) is disordered. A compositionally biased stretch (low complexity) spans 207–222 (THSGPTGPPSNTSSET). A compositionally biased stretch (basic and acidic residues) spans 236-252 (TVRESVMEESPSKDPGD). A compositionally biased stretch (low complexity) spans 260-301 (STSTLTSQTTTSSSATAEPSAKAAESQAGSAGSSGSCSNPAA). A compositionally biased stretch (polar residues) spans 313 to 322 (WARSMSTNKT). Residues 364–387 (EKPKFRSVAHAIRAGIFVDRMYRR) form a calmodulin-binding region. One can recognise a PDEase domain in the interval 392–786 (ALTAFPPDVV…RIWKEQAVKD (395 aa)). Histidine 469 serves as the catalytic Proton donor. Histidine 473, histidine 509, aspartate 510, and aspartate 617 together coordinate Zn(2+). Aspartate 510 lines the Mg(2+) pocket. 2 disordered regions span residues 720 to 744 (IVIP…AKTT) and 797 to 834 (EEAA…GAAA). A compositionally biased stretch (basic and acidic residues) spans 732-741 (DKPRDHRTEA). Low complexity predominate over residues 823-834 (EPAAEPADGAAA).

The protein belongs to the cyclic nucleotide phosphodiesterase family. PDE1 subfamily. It depends on Zn(2+) as a cofactor. The cofactor is Mg(2+). In terms of tissue distribution, expressed in the head (at protein level). Expressed in Malpighian tubules. Expressed in neurons in the brain and ventral ganglia with male flies having higher levels of expression in the abdominal ganglia compared to female flies.

The catalysed reaction is a nucleoside 3',5'-cyclic phosphate + H2O = a nucleoside 5'-phosphate + H(+). It catalyses the reaction 3',5'-cyclic GMP + H2O = GMP + H(+). The enzyme catalyses 3',5'-cyclic AMP + H2O = AMP + H(+). With respect to regulation, type I PDE are activated by the binding of calmodulin in the presence of Ca(2+). Inhibited by zaprinast and sildenafil. Functionally, cyclic nucleotide phosphodiesterase with a dual specificity for the second messengers cAMP and cGMP, which are key regulators of many important physiological processes. Required for male fertility and male mating behavior. This is Dual specificity calcium/calmodulin-dependent 3',5'-cyclic nucleotide phosphodiesterase 1 from Drosophila melanogaster (Fruit fly).